A 382-amino-acid polypeptide reads, in one-letter code: Manganese peroxidase H4 (382 aa).

Positions 1–24 are cleaved as a signal peptide; sequence MAFGSLLAFVALAAITRAAPTAES. Intrachain disulfides connect cysteine 27/cysteine 39, cysteine 38/cysteine 313, cysteine 57/cysteine 141, cysteine 277/cysteine 344, and cysteine 366/cysteine 373. Glutamate 59 and glutamate 63 together coordinate Mn(2+). The active-site Proton acceptor is histidine 70. Ca(2+)-binding residues include aspartate 71, glycine 86, aspartate 88, and serine 90. Asparagine 100 and asparagine 155 each carry an N-linked (GlcNAc...) asparagine glycan. Histidine 197 is a heme b binding site. Threonine 198 contributes to the Ca(2+) binding site. Residue aspartate 203 coordinates Mn(2+). Residues aspartate 215, threonine 217, threonine 220, and aspartate 222 each contribute to the Ca(2+) site. N-linked (GlcNAc...) asparagine glycosylation occurs at asparagine 241.

This sequence belongs to the peroxidase family. Ligninase subfamily. It depends on heme b as a cofactor. Requires Ca(2+) as cofactor.

Its subcellular location is the secreted. It carries out the reaction 2 Mn(2+) + H2O2 + 2 H(+) = 2 Mn(3+) + 2 H2O. In terms of biological role, catalyzes the oxidation of Mn(2+) to Mn(3+). The latter, acting as a diffusible redox mediator, is capable of oxidizing a variety of lignin compounds. This is Manganese peroxidase H4 from Phanerodontia chrysosporium (White-rot fungus).